We begin with the raw amino-acid sequence, 367 residues long: Histidinol-phosphate aminotransferase (367 aa).

At Lys227 the chain carries N6-(pyridoxal phosphate)lysine.

This sequence belongs to the class-II pyridoxal-phosphate-dependent aminotransferase family. Histidinol-phosphate aminotransferase subfamily. Homodimer. The cofactor is pyridoxal 5'-phosphate.

It catalyses the reaction L-histidinol phosphate + 2-oxoglutarate = 3-(imidazol-4-yl)-2-oxopropyl phosphate + L-glutamate. The protein operates within amino-acid biosynthesis; L-histidine biosynthesis; L-histidine from 5-phospho-alpha-D-ribose 1-diphosphate: step 7/9. This chain is Histidinol-phosphate aminotransferase, found in Leptospira borgpetersenii serovar Hardjo-bovis (strain JB197).